Consider the following 909-residue polypeptide: Translation initiation factor IF-2 (909 aa).

A disordered region spans residues 49 to 314 (LNREQGGSAG…GKQRKTSTLQ (266 aa)). Composition is skewed to basic and acidic residues over residues 99 to 177 (DAVE…EHKQ), 186 to 236 (IQSE…KWSS), and 255 to 270 (RAAE…GDRR). Over residues 271–285 (ARGRSGKATRQKKNN) the composition is skewed to basic residues. The segment covering 286-299 (KHSESKADREEARA) has biased composition (basic and acidic residues). One can recognise a tr-type G domain in the interval 408-577 (PRAPVVTIMG…LLQAEVLELK (170 aa)). A G1 region spans residues 417–424 (GHVDHGKT). GTP is bound at residue 417-424 (GHVDHGKT). Positions 442-446 (GITQH) are G2. The segment at 463–466 (DTPG) is G3. GTP is bound by residues 463–467 (DTPGH) and 517–520 (NKID). The segment at 517-520 (NKID) is G4. The interval 553 to 555 (SAK) is G5.

This sequence belongs to the TRAFAC class translation factor GTPase superfamily. Classic translation factor GTPase family. IF-2 subfamily.

It localises to the cytoplasm. Its function is as follows. One of the essential components for the initiation of protein synthesis. Protects formylmethionyl-tRNA from spontaneous hydrolysis and promotes its binding to the 30S ribosomal subunits. Also involved in the hydrolysis of GTP during the formation of the 70S ribosomal complex. The polypeptide is Translation initiation factor IF-2 (Photorhabdus laumondii subsp. laumondii (strain DSM 15139 / CIP 105565 / TT01) (Photorhabdus luminescens subsp. laumondii)).